The sequence spans 444 residues: Chromosome partition protein MukF (444 aa).

The segment at 212-240 is leucine-zipper; it reads LDETSGNLRELQDTLNAAGDKLQAQLLRI.

It belongs to the MukF family. In terms of assembly, interacts, and probably forms a ternary complex, with MukE and MukB via its C-terminal region. The complex formation is stimulated by calcium or magnesium. It is required for an interaction between MukE and MukB.

It localises to the cytoplasm. It is found in the nucleoid. Its function is as follows. Involved in chromosome condensation, segregation and cell cycle progression. May participate in facilitating chromosome segregation by condensation DNA from both sides of a centrally located replisome during cell division. Not required for mini-F plasmid partitioning. Probably acts via its interaction with MukB and MukE. Overexpression results in anucleate cells. It has a calcium binding activity. This chain is Chromosome partition protein MukF, found in Haemophilus influenzae (strain ATCC 51907 / DSM 11121 / KW20 / Rd).